Here is a 422-residue protein sequence, read N- to C-terminus: Keratin, type I cytoskeletal 23 (422 aa).

Polar residues predominate over residues 1-13 (MNSGHSFSQTPSA). The tract at residues 1–71 (MNSGHSFSQT…GRSSPLLGGN (71 aa)) is head. Residues 1-73 (MNSGHSFSQT…SSPLLGGNGK (73 aa)) form a disordered region. The coil 1A stretch occupies residues 72–107 (GKATMQNLNDRLASYLEKVRALEEANMKLESRILKW). The IF rod domain maps to 72-382 (GKATMQNLND…RLLEGESEGT (311 aa)). The linker 1 stretch occupies residues 108–125 (HQQRDPGSKKDYSQYEEN). Residues 126-217 (ITHLQEQIVD…KHHEQEMEKH (92 aa)) form a coil 1B region. The segment at 218–240 (HVPSDFNVNVKVDTGPREDLIKV) is linker 12. Positions 241–378 (LEDMRQEYEL…TTYRRLLEGE (138 aa)) are coil 2. Residues 379 to 422 (SEGTREESKSSMKVSATPKIKAITQETINGRLVLCQVNEIQKHA) are rod-like helical tail.

The protein belongs to the intermediate filament family. In terms of assembly, heterotetramer of two type I and two type II keratins.

The sequence is that of Keratin, type I cytoskeletal 23 (KRT23) from Homo sapiens (Human).